The primary structure comprises 339 residues: tRNA N6-adenosine threonylcarbamoyltransferase (339 aa).

2 residues coordinate Fe cation: H111 and H115. Residues 139 to 143, D172, G185, D189, and N280 contribute to the substrate site; that span reads LVSGG. D308 serves as a coordination point for Fe cation.

The protein belongs to the KAE1 / TsaD family. Fe(2+) is required as a cofactor.

It localises to the cytoplasm. The catalysed reaction is L-threonylcarbamoyladenylate + adenosine(37) in tRNA = N(6)-L-threonylcarbamoyladenosine(37) in tRNA + AMP + H(+). In terms of biological role, required for the formation of a threonylcarbamoyl group on adenosine at position 37 (t(6)A37) in tRNAs that read codons beginning with adenine. Is involved in the transfer of the threonylcarbamoyl moiety of threonylcarbamoyl-AMP (TC-AMP) to the N6 group of A37, together with TsaE and TsaB. TsaD likely plays a direct catalytic role in this reaction. This chain is tRNA N6-adenosine threonylcarbamoyltransferase, found in Bacteroides thetaiotaomicron (strain ATCC 29148 / DSM 2079 / JCM 5827 / CCUG 10774 / NCTC 10582 / VPI-5482 / E50).